The chain runs to 353 residues: N-terminal EF-hand calcium-binding protein 3 (353 aa).

The 36-residue stretch at Ala-27–Ser-62 folds into the EF-hand domain. Ca(2+) contacts are provided by Asp-40, Asn-42, Asp-44, Lys-46, and Glu-51. The tract at residues Ile-172–Ser-181 is required for interaction with APBA3. Residues Ser-193–Ser-203 are compositionally biased toward low complexity. The interval Ser-193–Gln-213 is disordered. The segment covering Asp-204–Gln-213 has biased composition (polar residues). Residues Leu-253–Phe-342 enclose the ABM domain.

In terms of assembly, interacts with the N-terminal domain of APBA2. Interacts with NEK2. Interacts with APBA3; APBA3 seems to mediate the interaction between NECAB3 and HIF1AN. Post-translationally, phosphorylated by NEK2. In terms of tissue distribution, widely expressed, with highest levels in the brain.

Its subcellular location is the golgi apparatus. Inhibits the interaction of APBA2 with amyloid-beta precursor protein (APP), and hence allows formation of amyloid-beta. May enhance the activity of HIF1A and thus promote glycolysis under normoxic conditions; the function requires its ABM domain and may implicate the stabilization of the interaction between HIF1AN and APBA3. The polypeptide is N-terminal EF-hand calcium-binding protein 3 (Necab3) (Mus musculus (Mouse)).